Here is a 375-residue protein sequence, read N- to C-terminus: UDP-N-acetylglucosamine--N-acetylmuramyl-(pentapeptide) pyrophosphoryl-undecaprenol N-acetylglucosamine transferase (375 aa).

UDP-N-acetyl-alpha-D-glucosamine-binding positions include 13 to 15 (TGG), asparagine 124, arginine 165, serine 193, and glutamine 294.

The protein belongs to the glycosyltransferase 28 family. MurG subfamily.

It localises to the cell inner membrane. The enzyme catalyses di-trans,octa-cis-undecaprenyl diphospho-N-acetyl-alpha-D-muramoyl-L-alanyl-D-glutamyl-meso-2,6-diaminopimeloyl-D-alanyl-D-alanine + UDP-N-acetyl-alpha-D-glucosamine = di-trans,octa-cis-undecaprenyl diphospho-[N-acetyl-alpha-D-glucosaminyl-(1-&gt;4)]-N-acetyl-alpha-D-muramoyl-L-alanyl-D-glutamyl-meso-2,6-diaminopimeloyl-D-alanyl-D-alanine + UDP + H(+). It participates in cell wall biogenesis; peptidoglycan biosynthesis. Functionally, cell wall formation. Catalyzes the transfer of a GlcNAc subunit on undecaprenyl-pyrophosphoryl-MurNAc-pentapeptide (lipid intermediate I) to form undecaprenyl-pyrophosphoryl-MurNAc-(pentapeptide)GlcNAc (lipid intermediate II). In Chelativorans sp. (strain BNC1), this protein is UDP-N-acetylglucosamine--N-acetylmuramyl-(pentapeptide) pyrophosphoryl-undecaprenol N-acetylglucosamine transferase.